Here is a 546-residue protein sequence, read N- to C-terminus: Chaperonin GroEL (546 aa).

ATP-binding positions include 29 to 32, Lys50, 86 to 90, Gly414, and Asp494; these read TLGP and DGTTT. Positions 525 to 546 are disordered; it reads KKESAAPAMPGHDGMGGMGGMM. The span at 537–546 shows a compositional bias: gly residues; that stretch reads DGMGGMGGMM.

Belongs to the chaperonin (HSP60) family. In terms of assembly, forms a cylinder of 14 subunits composed of two heptameric rings stacked back-to-back. Interacts with the co-chaperonin GroES.

The protein localises to the cytoplasm. The enzyme catalyses ATP + H2O + a folded polypeptide = ADP + phosphate + an unfolded polypeptide.. In terms of biological role, together with its co-chaperonin GroES, plays an essential role in assisting protein folding. The GroEL-GroES system forms a nano-cage that allows encapsulation of the non-native substrate proteins and provides a physical environment optimized to promote and accelerate protein folding. The sequence is that of Chaperonin GroEL from Bdellovibrio bacteriovorus (strain ATCC 15356 / DSM 50701 / NCIMB 9529 / HD100).